The following is a 154-amino-acid chain: 6,7-dimethyl-8-ribityllumazine synthase (154 aa).

Residues 22-23 (FN), 56-58 (AFE), and 80-82 (TVI) each bind 5-amino-6-(D-ribitylamino)uracil. 85–86 (AT) lines the (2S)-2-hydroxy-3-oxobutyl phosphate pocket. His-88 functions as the Proton donor in the catalytic mechanism. Position 113 (Phe-113) interacts with 5-amino-6-(D-ribitylamino)uracil. Arg-127 is a binding site for (2S)-2-hydroxy-3-oxobutyl phosphate.

It belongs to the DMRL synthase family. In terms of assembly, forms an icosahedral capsid composed of 60 subunits, arranged as a dodecamer of pentamers. Can interact with riboflavin synthase, forming a lumazine synthase/riboflavin synthase complex, also designated as 'heavy riboflavin synthase complex', which consists of a trimer of riboflavin synthase enclosed within the icosahedral structure composed of 60 subunits of 6,7-dimethyl-8-ribityllumazine synthase.

It catalyses the reaction (2S)-2-hydroxy-3-oxobutyl phosphate + 5-amino-6-(D-ribitylamino)uracil = 6,7-dimethyl-8-(1-D-ribityl)lumazine + phosphate + 2 H2O + H(+). Its pathway is cofactor biosynthesis; riboflavin biosynthesis; riboflavin from 2-hydroxy-3-oxobutyl phosphate and 5-amino-6-(D-ribitylamino)uracil: step 1/2. Catalyzes the formation of 6,7-dimethyl-8-ribityllumazine by condensation of 5-amino-6-(D-ribitylamino)uracil with 3,4-dihydroxy-2-butanone 4-phosphate. This is the penultimate step in the biosynthesis of riboflavin. Is able to use the non-natural R enantiomer of 3,4-dihydroxy-2-butanone 4-phosphate as a substrate, but with less efficiency than the natural S enantiomer. Cannot use unphosphorylated 3,4-dihydroxy-2-butanone, 3,4-dihydroxy-2-butanone 3-phosphate or diacetyl as substrates. In Bacillus subtilis (strain 168), this protein is 6,7-dimethyl-8-ribityllumazine synthase (ribH).